A 94-amino-acid polypeptide reads, in one-letter code: Co-chaperonin GroES (94 aa).

It belongs to the GroES chaperonin family. As to quaternary structure, heptamer of 7 subunits arranged in a ring. Interacts with the chaperonin GroEL.

It localises to the cytoplasm. Together with the chaperonin GroEL, plays an essential role in assisting protein folding. The GroEL-GroES system forms a nano-cage that allows encapsulation of the non-native substrate proteins and provides a physical environment optimized to promote and accelerate protein folding. GroES binds to the apical surface of the GroEL ring, thereby capping the opening of the GroEL channel. The protein is Co-chaperonin GroES of Streptococcus agalactiae serotype III (strain NEM316).